Consider the following 179-residue polypeptide: Ribosome-recycling factor (179 aa).

Belongs to the RRF family.

It is found in the cytoplasm. Responsible for the release of ribosomes from messenger RNA at the termination of protein biosynthesis. May increase the efficiency of translation by recycling ribosomes from one round of translation to another. The chain is Ribosome-recycling factor from Chlamydia trachomatis serovar A (strain ATCC VR-571B / DSM 19440 / HAR-13).